The sequence spans 140 residues: Large ribosomal subunit protein uL13 (140 aa).

This sequence belongs to the universal ribosomal protein uL13 family. Part of the 50S ribosomal subunit.

This protein is one of the early assembly proteins of the 50S ribosomal subunit, although it is not seen to bind rRNA by itself. It is important during the early stages of 50S assembly. This is Large ribosomal subunit protein uL13 from Methanosarcina barkeri (strain Fusaro / DSM 804).